We begin with the raw amino-acid sequence, 282 residues long: 2,3,4,5-tetrahydropyridine-2,6-dicarboxylate N-succinyltransferase (282 aa).

Substrate contacts are provided by Arg109 and Asp146.

This sequence belongs to the transferase hexapeptide repeat family. As to quaternary structure, homotrimer.

It is found in the cytoplasm. The enzyme catalyses (S)-2,3,4,5-tetrahydrodipicolinate + succinyl-CoA + H2O = (S)-2-succinylamino-6-oxoheptanedioate + CoA. It functions in the pathway amino-acid biosynthesis; L-lysine biosynthesis via DAP pathway; LL-2,6-diaminopimelate from (S)-tetrahydrodipicolinate (succinylase route): step 1/3. This chain is 2,3,4,5-tetrahydropyridine-2,6-dicarboxylate N-succinyltransferase, found in Bartonella henselae (strain ATCC 49882 / DSM 28221 / CCUG 30454 / Houston 1) (Rochalimaea henselae).